Here is a 235-residue protein sequence, read N- to C-terminus: 1-(5-phosphoribosyl)-5-[(5-phosphoribosylamino)methylideneamino] imidazole-4-carboxamide isomerase (235 aa).

The Proton acceptor role is filled by Asp8. Asp129 acts as the Proton donor in catalysis.

It belongs to the HisA/HisF family.

Its subcellular location is the cytoplasm. It carries out the reaction 1-(5-phospho-beta-D-ribosyl)-5-[(5-phospho-beta-D-ribosylamino)methylideneamino]imidazole-4-carboxamide = 5-[(5-phospho-1-deoxy-D-ribulos-1-ylimino)methylamino]-1-(5-phospho-beta-D-ribosyl)imidazole-4-carboxamide. It functions in the pathway amino-acid biosynthesis; L-histidine biosynthesis; L-histidine from 5-phospho-alpha-D-ribose 1-diphosphate: step 4/9. The sequence is that of 1-(5-phosphoribosyl)-5-[(5-phosphoribosylamino)methylideneamino] imidazole-4-carboxamide isomerase from Thermoanaerobacter sp. (strain X514).